A 142-amino-acid chain; its full sequence is Small ribosomal subunit protein bS6 (142 aa).

Residues 110-142 are disordered; that stretch reads NKKPSHAKEKHEKTEHAHSHHAEEAKSTESHSE.

The protein belongs to the bacterial ribosomal protein bS6 family.

Its function is as follows. Binds together with bS18 to 16S ribosomal RNA. This Helicobacter pylori (strain G27) protein is Small ribosomal subunit protein bS6.